Consider the following 686-residue polypeptide: Polyribonucleotide nucleotidyltransferase (686 aa).

Mg(2+) is bound by residues aspartate 478 and aspartate 484. The KH domain occupies 545–604 (PRVEVIQIPTDKIGLLIGPGGKTINALQDEYGVNISVENDGTVYVAGVEGMSVKAAVSAI). The 71-residue stretch at 614-684 (GDIYVGKVVK…KQNRISLEMV (71 aa)) folds into the S1 motif domain.

It belongs to the polyribonucleotide nucleotidyltransferase family. The cofactor is Mg(2+).

It is found in the cytoplasm. The catalysed reaction is RNA(n+1) + phosphate = RNA(n) + a ribonucleoside 5'-diphosphate. Functionally, involved in mRNA degradation. Catalyzes the phosphorolysis of single-stranded polyribonucleotides processively in the 3'- to 5'-direction. In Rubrobacter xylanophilus (strain DSM 9941 / JCM 11954 / NBRC 16129 / PRD-1), this protein is Polyribonucleotide nucleotidyltransferase.